We begin with the raw amino-acid sequence, 588 residues long: DNA mismatch repair protein MutL (588 aa).

Belongs to the DNA mismatch repair MutL/HexB family.

Functionally, this protein is involved in the repair of mismatches in DNA. It is required for dam-dependent methyl-directed DNA mismatch repair. May act as a 'molecular matchmaker', a protein that promotes the formation of a stable complex between two or more DNA-binding proteins in an ATP-dependent manner without itself being part of a final effector complex. This Methanocorpusculum labreanum (strain ATCC 43576 / DSM 4855 / Z) protein is DNA mismatch repair protein MutL.